The chain runs to 190 residues: Potassium-transporting ATPase KdpC subunit (190 aa).

Residues 10 to 30 traverse the membrane as a helical segment; sequence TFLFLLLITGGVYPLLTTALG.

This sequence belongs to the KdpC family. The system is composed of three essential subunits: KdpA, KdpB and KdpC.

The protein localises to the cell inner membrane. Its function is as follows. Part of the high-affinity ATP-driven potassium transport (or Kdp) system, which catalyzes the hydrolysis of ATP coupled with the electrogenic transport of potassium into the cytoplasm. This subunit acts as a catalytic chaperone that increases the ATP-binding affinity of the ATP-hydrolyzing subunit KdpB by the formation of a transient KdpB/KdpC/ATP ternary complex. The protein is Potassium-transporting ATPase KdpC subunit of Escherichia coli O6:H1 (strain CFT073 / ATCC 700928 / UPEC).